The following is a 317-amino-acid chain: MSCLDVMYQVYGPPQPYFAAAYTPYHQKLAYYSKMQEAQECNASPSSSGSGSSSFSSQTPASIKEEEGSPEKERPPEAEYINSRCVLFTYFQGDISSVVDEHFSRALSQPSSYSPSCTSSKAPRSSGPWRDCSFPMSQRSFPASFWNSAYQAPVPPPLGSPLATAHSELPFAAADPYSPAALHGHLHQGATEPWHHAHPHHAHPHHPYALGGALGAQAAPYPRPAAVHEVYAPHFDPRYGPLLMPAASGRPARLATAPAPAPGSPPCELSGKGEPAGAAWAGPGGPFASPSGDVAQGLGLSVDSARRYSLCGASLLS.

4 disordered regions span residues 41-76 (CNAS…ERPP), 108-128 (SQPS…SSGP), 191-214 (TEPW…GGAL), and 253-293 (RLAT…PSGD). The segment covering 44 to 57 (SPSSSGSGSSSFSS) has biased composition (low complexity). Basic and acidic residues predominate over residues 63–76 (IKEEEGSPEKERPP). The segment covering 108–120 (SQPSSYSPSCTSS) has biased composition (low complexity). Basic residues predominate over residues 196–206 (HAHPHHAHPHH). Residues 272 to 292 (KGEPAGAAWAGPGGPFASPSG) show a composition bias toward low complexity.

The protein belongs to the vestigial family. Interacts with TEFs. Binds to TEAD1/TEF1. Skeletal muscle.

It localises to the nucleus. In terms of biological role, may act as a specific coactivator for the mammalian TEFs. May play a role in the development of skeletal muscles. The chain is Transcription cofactor vestigial-like protein 2 (VGLL2) from Homo sapiens (Human).